A 50-amino-acid chain; its full sequence is Large ribosomal subunit protein bL33B (50 aa).

The protein belongs to the bacterial ribosomal protein bL33 family.

The protein is Large ribosomal subunit protein bL33B of Ligilactobacillus salivarius (strain UCC118) (Lactobacillus salivarius).